A 132-amino-acid chain; its full sequence is Cytochrome c-554 (132 aa).

Residues 1-24 (MKSISMLTLAASVAFAVTAGQAVA) form the signal peptide. The region spanning 26–126 (GDPAAGEKVF…NVWAYLSQFG (101 aa)) is the Cytochrome c domain. Residues Cys38, Cys41, His42, and Met104 each coordinate heme c.

Binds 1 heme c group covalently per subunit.

The protein resides in the periplasm. The protein is Cytochrome c-554 of Methylosinus trichosporium.